The sequence spans 343 residues: MPISCKSRCGNRAALKRPKTGDALCKECFFAAFEAEIHHTISSSNLFRRGEKVAVAASGGKDSTVLAHVLKLLNERHDYGLDLVLLSIDEGITGYRDDSLETVKQNRDDYQMPLKILSYEELYGWTMDRIVAQIGRSNNCTFCGVFRRQALDRGAKLLGVDSIATGHNADDIAETVLMNILRGDTARLRRCTDIKTGGGEDSIPRVKPLKYSYEKEIVMYAHYKKLVYFSTECVFAPNAYRGHARAFLKDLEKVRPSVIMDIIYSGEQLRFKDTVKKPVRGICTRCGFVSSQQPCKACVLLEGLNRGLPKLGIGKKSKGDRMIAKQNQELALRERANLVKNDF.

It belongs to the TtcA family. CTU1/NCS6/ATPBD3 subfamily.

It localises to the cytoplasm. The protein operates within tRNA modification; 5-methoxycarbonylmethyl-2-thiouridine-tRNA biosynthesis. In terms of biological role, plays a central role in 2-thiolation of mcm(5)S(2)U at tRNA wobble positions of tRNA(Lys), tRNA(Glu) and tRNA(Gln). Directly binds tRNAs and probably acts by catalyzing adenylation of tRNAs, an intermediate required for 2-thiolation. It is unclear whether it acts as a sulfurtransferase that transfers sulfur from thiocarboxylated URM1 onto the uridine of tRNAs at wobble position. The sequence is that of Cytoplasmic tRNA 2-thiolation protein 1 from Drosophila ananassae (Fruit fly).